A 352-amino-acid polypeptide reads, in one-letter code: Probable gamma-glutamyl hydrolase 3 (352 aa).

The N-terminal stretch at 1–19 (MWRFCFFLSLLFFDVSAVK) is a signal peptide. The Gamma-glutamyl hydrolase domain occupies 49–352 (AADPNLNYKP…SGDDEVYIFT (304 aa)). The Nucleophile role is filled by Cys-166. His-279 is a catalytic residue.

This sequence belongs to the peptidase C26 family.

The protein localises to the vacuole. The protein resides in the secreted. Its subcellular location is the extracellular space. It is found in the cell wall. It catalyses the reaction (6S)-5,6,7,8-tetrahydrofolyl-(gamma-L-Glu)(n) + (n-1) H2O = (6S)-5,6,7,8-tetrahydrofolate + (n-1) L-glutamate. Its function is as follows. Cleaves the polyglutamate sidechains of folate polyglutamates in the vacuole. Is important for polyglutamyl tail length determination before vacuolar exit. Plays a role on folate stability and intracellular folate content. In Arabidopsis thaliana (Mouse-ear cress), this protein is Probable gamma-glutamyl hydrolase 3 (GGH3).